Consider the following 143-residue polypeptide: Monothiol glutaredoxin-5, mitochondrial (143 aa).

The N-terminal 28 residues, 1-28, are a transit peptide targeting the mitochondrion; it reads MFGRISTRALLRPAFTHRIPSVSLSRFL. The region spanning 33 to 138 is the Glutaredoxin domain; the sequence is KQAIESAIES…KLLEDADALV (106 aa). Lys50 lines the glutathione pocket. Cys58 contributes to the [2Fe-2S] cluster binding site. Glutathione is bound by residues 90 to 94, Ile102, and 115 to 116; these read REGVK and CD.

This sequence belongs to the glutaredoxin family. Monothiol subfamily. As to quaternary structure, homodimer.

It localises to the mitochondrion matrix. Functionally, monothiol glutaredoxin involved in mitochondrial iron-sulfur (Fe/S) cluster transfer. Receives iron-sulfur clusters from scaffold protein ISU1 and mediates their transfer to apoproteins, to the 4Fe/FS cluster biosynthesis machinery, or export from mitochondrion. This is Monothiol glutaredoxin-5, mitochondrial (GRX5) from Lachancea kluyveri (Yeast).